Reading from the N-terminus, the 131-residue chain is Small ribosomal subunit protein uS8 (131 aa).

It belongs to the universal ribosomal protein uS8 family. Part of the 30S ribosomal subunit. Contacts proteins S5 and S12.

Functionally, one of the primary rRNA binding proteins, it binds directly to 16S rRNA central domain where it helps coordinate assembly of the platform of the 30S subunit. The chain is Small ribosomal subunit protein uS8 from Finegoldia magna (strain ATCC 29328 / DSM 20472 / WAL 2508) (Peptostreptococcus magnus).